Consider the following 805-residue polypeptide: Phenylalanine--tRNA ligase beta subunit (805 aa).

The 110-residue stretch at 39-148 (APPFTGVVVA…AALRPGTDIR (110 aa)) folds into the tRNA-binding domain. The 76-residue stretch at 399–474 (PVREPVRMRL…RVYGFERIPD (76 aa)) folds into the B5 domain. Asp452, Asp458, Glu461, and Glu462 together coordinate Mg(2+). Positions 703–804 (SRQPAVVRDL…LVAAHNARQR (102 aa)) constitute an FDX-ACB domain.

It belongs to the phenylalanyl-tRNA synthetase beta subunit family. Type 1 subfamily. As to quaternary structure, tetramer of two alpha and two beta subunits. It depends on Mg(2+) as a cofactor.

It localises to the cytoplasm. The enzyme catalyses tRNA(Phe) + L-phenylalanine + ATP = L-phenylalanyl-tRNA(Phe) + AMP + diphosphate + H(+). This Bordetella bronchiseptica (strain ATCC BAA-588 / NCTC 13252 / RB50) (Alcaligenes bronchisepticus) protein is Phenylalanine--tRNA ligase beta subunit.